The sequence spans 1274 residues: MPVAINSFNYNDPVNDDTILYMQIPYEEKSKKYYKAFEIMRNVWIIPERNTIGTNPSDFDPPASLKNGSSAYYDPNYLTTDAEKDRYLKTTIKLFKRINSNPAGKVLLQEISYAKPYLGNDHTPIDEFSPVTRTTSVNIKLSTNVESSMLLNLLVLGAGPDIFESCCYPVRKLIDPDVVYDPSNYGFGSINIVTFSPEYEYTFNDISGGHNSSTESFIADPAISLAHELIHALHGLYGARGVTYEETIEVKQAPLMIAEKPIRLEEFLTFGGQDLNIITSAMKEKIYNNLLANYEKIATRLSEVNSAPPEYDINEYKDYFQWKYGLDKNADGSYTVNENKFNEIYKKLYSFTESDLANKFKVKCRNTYFIKYEFLKVPNLLDDDIYTVSEGFNIGNLAVNNRGQSIKLNPKIIDSIPDKGLVEKIVKFCKSVIPRKGTKAPPRLCIRVNNSELFFVASESSYNENDINTPKEIDDTTNLNNNYRNNLDEVILDYNSQTIPQISNRTLNTLVQDNSYVPRYDSNGTSEIEEYDVVDFNVFFYLHAQKVPEGETNISLTSSIDTALLEESKDIFFSSEFIDTINKPVNAALFIDWISKVIRDFTTEATQKSTVDKIADISLIVPYVGLALNIIIEAEKGNFEEAFELLGVGILLEFVPELTIPVILVFTIKSYIDSYENKNKAIKAINNSLIEREAKWKEIYSWIVSNWLTRINTQFNKRKEQMYQALQNQVDAIKTAIEYKYNNYTSDEKNRLESEYNINNIEEELNKKVSLAMKNIERFMTESSISYLMKLINEAKVGKLKKYDNHVKSDLLNYILDHRSILGEQTNELSDLVTSTLNSSIPFELSSYTNDKILIIYFNRLYKKIKDSSILDMRYENNKFIDISGYGSNISINGNVYIYSTNRNQFGIYNSRLSEVNIAQNNDIIYNSRYQNFSISFWVRIPKHYKPMNHNREYTIINCMGNNNSGWKISLRTVRDCEIIWTLQDTSGNKENLIFRYEELNRISNYINKWIFVTITNNRLGNSRIYINGNLIVEKSISNLGDIHVSDNILFKIVGCDDETYVGIRYFKVFNTELDKTEIETLYSNEPDPSILKNYWGNYLLYNKKYYLFNLLRKDKYITLNSGILNINQQRGVTEGSVFLNYKLYEGVEVIIRKNGPIDISNTDNFVRKNDLAYINVVDRGVEYRLYADTKSEKEKIIRTSNLNDSLGQIIVMDSIGNNCTMNFQNNNGSNIGLLGFHSNNLVASSWYYNNIRRNTSSNGCFWSSISKENGWKE.

His-227 lines the Zn(2+) pocket. The active site involves Glu-228. Zn(2+)-binding residues include His-231 and Glu-266. Cys-429 and Cys-445 form a disulfide bridge. The interval 440–862 (APPRLCIRVN…ILIIYFNRLY (423 aa)) is translocation domain (TD). The interval 485–534 (NNLDEVILDYNSQTIPQISNRTLNTLVQDNSYVPRYDSNGTSEIEEYDVV) is belt. The tract at residues 863 to 1087 (KKIKDSSILD…EIETLYSNEP (225 aa)) is N-terminus of receptor binding domain (N-RBD). The segment at 1088–1274 (DPSILKNYWG…SISKENGWKE (187 aa)) is C-terminus of receptor binding domain (C-RBD). A Host ganglioside-binding motif motif is present at residues 1245 to 1248 (SSWY).

It belongs to the peptidase M27 family. In terms of assembly, heterodimer; disulfide-linked heterodimer of a light chain (LC) and a heavy chain (HC). The LC has the proteolytic/pharmacological activity, while the N- and C-terminal of the HC mediate channel formation and toxin binding, respectively. Interacts with host synaptic vesicle glycoproteins SV2A, SV2B and SV2C. The cofactor is Zn(2+).

The protein localises to the secreted. It is found in the host cytoplasm. It localises to the host cytosol. The protein resides in the host synapse. Its subcellular location is the host presynaptic cell membrane. The protein localises to the host cytoplasmic vesicle. It is found in the host secretory vesicle. It localises to the host synaptic vesicle membrane. It catalyses the reaction Limited hydrolysis of proteins of the neuroexocytosis apparatus, synaptobrevins, SNAP25 or syntaxin. No detected action on small molecule substrates.. Its activity is regulated as follows. Proteolysis inhibited by 1,10-phenanthroline, captopril and EDTA. Its function is as follows. Botulinum toxin causes flaccid paralysis by inhibiting neurotransmitter (acetylcholine) release from the presynaptic membranes of nerve terminals of the eukaryotic host skeletal and autonomic nervous system, with frequent heart or respiratory failure. Precursor of botulinum neurotoxin F which may have 2 coreceptors; complex polysialylated gangliosides found on neural tissue and specific membrane-anchored proteins found in synaptic vesicles. Receptor proteins are exposed on host presynaptic cell membrane during neurotransmitter release, when the toxin heavy chain (HC) binds to them. Upon synaptic vesicle recycling the toxin is taken up via the endocytic pathway. When the pH of the toxin-containing endosome drops a structural rearrangement occurs so that the N-terminus of the HC forms pores that allows the light chain (LC) to translocate into the cytosol. Once in the cytosol the disulfide bond linking the 2 subunits is reduced and LC cleaves its target protein on synaptic vesicles, preventing their fusion with the cytoplasmic membrane and thus neurotransmitter release. Whole toxin only has protease activity after reduction, which releases LC. Requires complex eukaryotic host polysialogangliosides for full neurotoxicity. It is not clear whether a synaptic vesicle protein acts as its receptor; there is evidence for and against SV2 fulfilling this function. Has proteolytic activity. After translocation into the eukaryotic host cytosol, inhibits neurotransmitter release by acting as a zinc endopeptidase that catalyzes the hydrolysis of the '60-Gln-|-Lys-61' bond of synaptobrevin-1/VAMP1 and the equivalent 'Gln-|-Lys' sites in VAMP2 and VAMP3. Cleaves the '48-Gln-|-Lys-49' bond of A.californica synaptobrevin (AC P35589). In terms of biological role, responsible for host epithelial cell transcytosis, host nerve cell targeting and translocation of light chain (LC) into host cytosol. Composed of 3 subdomains; the translocation domain (TD), and N-terminus and C-terminus of the receptor-binding domain (RBD). The RBD is responsible for the adherence of the toxin to the cell surface. It simultaneously recognizes 2 coreceptors; polysialated gangliosides and the receptor protein SV2A, SV2B and SV2C in close proximity on host synaptic vesicles; although not all evidence indicates these are the receptors. The N-terminus of the TD wraps an extended belt around the perimeter of the LC, protecting Zn(2+) in the active site; it may also prevent premature LC dissociation from the translocation channel and protect toxin prior to translocation. The TD inserts into synaptic vesicle membrane to allow translocation into the host cytosol. The sequence is that of Botulinum neurotoxin type F (botF) from Clostridium botulinum.